Reading from the N-terminus, the 946-residue chain is DNA ligase 4 (946 aa).

Positions 295, 297, 302, 355, 397, 457, 462, 479, and 481 each coordinate ATP. Residue lysine 297 is the N6-AMP-lysine intermediate of the active site. Residue glutamate 355 participates in Mg(2+) binding. Glutamate 457 contacts Mg(2+). BRCT domains lie at 688–787 (HRSD…PSHC) and 845–945 (VPHF…NYRL).

This sequence belongs to the ATP-dependent DNA ligase family. Mg(2+) serves as cofactor.

Its subcellular location is the nucleus. It catalyses the reaction ATP + (deoxyribonucleotide)n-3'-hydroxyl + 5'-phospho-(deoxyribonucleotide)m = (deoxyribonucleotide)n+m + AMP + diphosphate.. In terms of biological role, DNA ligase involved in DNA non-homologous end joining (NHEJ); required for double-strand break (DSB) repair. This chain is DNA ligase 4 (LIG4), found in Candida glabrata (strain ATCC 2001 / BCRC 20586 / JCM 3761 / NBRC 0622 / NRRL Y-65 / CBS 138) (Yeast).